We begin with the raw amino-acid sequence, 199 residues long: Nicotinamide riboside kinase 1 (199 aa).

Residue 10–18 (GVTNSGKTT) coordinates ATP. Positions 17 and 36 each coordinate Mg(2+). Aspartate 36 (proton acceptor) is an active-site residue. Substrate is bound by residues 36 to 39 (DDFF) and 55 to 56 (YD). Arginine 128 contributes to the ATP binding site. Residues arginine 129 and 134–135 (YQ) contribute to the substrate site. Residues 132 to 134 (RVY) and 172 to 174 (KSE) each bind ATP.

This sequence belongs to the uridine kinase family. NRK subfamily. Monomer.

It catalyses the reaction beta-nicotinamide D-riboside + ATP = beta-nicotinamide D-ribonucleotide + ADP + H(+). The catalysed reaction is beta-D-ribosylnicotinate + ATP = nicotinate beta-D-ribonucleotide + ADP + H(+). It participates in cofactor biosynthesis; NAD(+) biosynthesis. Its function is as follows. Catalyzes the phosphorylation of nicotinamide riboside (NR) and nicotinic acid riboside (NaR) to form nicotinamide mononucleotide (NMN) and nicotinic acid mononucleotide (NaMN). The enzyme also phosphorylates the antitumor drugs tiazofurin and 3-deazaguanosine. This chain is Nicotinamide riboside kinase 1 (NMRK1), found in Homo sapiens (Human).